We begin with the raw amino-acid sequence, 329 residues long: Fructose-1,6-bisphosphatase class 1 (329 aa).

4 residues coordinate Mg(2+): Glu84, Asp103, Leu105, and Asp106. Substrate contacts are provided by residues 106 to 109 (DGSS), Asn196, and Lys262. Glu268 serves as a coordination point for Mg(2+).

The protein belongs to the FBPase class 1 family. As to quaternary structure, homotetramer. Requires Mg(2+) as cofactor.

It is found in the cytoplasm. It catalyses the reaction beta-D-fructose 1,6-bisphosphate + H2O = beta-D-fructose 6-phosphate + phosphate. It participates in carbohydrate biosynthesis; gluconeogenesis. The protein is Fructose-1,6-bisphosphatase class 1 of Shewanella woodyi (strain ATCC 51908 / MS32).